We begin with the raw amino-acid sequence, 306 residues long: UDP-N-acetylenolpyruvoylglucosamine reductase (306 aa).

In terms of domain architecture, FAD-binding PCMH-type spans 28 to 194 (KIGNISKLFL…LKTELNLKKE (167 aa)). The active-site Proton donor is the serine 223. Residue glutamate 295 is part of the active site.

The protein belongs to the MurB family. The cofactor is FAD.

It localises to the cytoplasm. The enzyme catalyses UDP-N-acetyl-alpha-D-muramate + NADP(+) = UDP-N-acetyl-3-O-(1-carboxyvinyl)-alpha-D-glucosamine + NADPH + H(+). It functions in the pathway cell wall biogenesis; peptidoglycan biosynthesis. Functionally, cell wall formation. In Borrelia garinii subsp. bavariensis (strain ATCC BAA-2496 / DSM 23469 / PBi) (Borreliella bavariensis), this protein is UDP-N-acetylenolpyruvoylglucosamine reductase.